The following is a 1770-amino-acid chain: Probable outer membrane protein PmpC (1770 aa).

Residues 1–20 form the signal peptide; the sequence is MKFMSATAVFAAALSSVTEA. 5 disordered regions span residues 73-109, 264-311, 481-505, 611-818, and 1271-1329; these read LPRK…ELDN, EDTL…GKGG, PAAP…TNSD, ESTP…STTE, and LRII…TSRT. Over residues 85–97 the composition is skewed to low complexity; it reads SPTTEGVSSSSSG. The span at 268 to 285 shows a compositional bias: polar residues; that stretch reads DSTPETEQTESNGNQDGS. Low complexity-rich tracts occupy residues 294–303 and 496–505; these read SESPESTPSP and QTETSDTNSD. Composition is skewed to polar residues over residues 631-675 and 682-703; these read TEDP…TGNA and QDST…QSNE. Low complexity-rich tracts occupy residues 719 to 748 and 762 to 802; these read ESVS…GDQS and STDS…GDSA. The span at 1303–1319 shows a compositional bias: polar residues; the sequence is NNDASNQGESANGSSSP. The Autotransporter domain maps to 1477 to 1770; the sequence is EEVSYNNLWI…MMNCGARMTF (294 aa).

This sequence belongs to the PMP outer membrane protein family.

It localises to the secreted. The protein localises to the cell wall. It is found in the cell outer membrane. This is Probable outer membrane protein PmpC (pmpC) from Chlamydia trachomatis serovar D (strain ATCC VR-885 / DSM 19411 / UW-3/Cx).